Here is a 392-residue protein sequence, read N- to C-terminus: O-phospho-L-seryl-tRNA:Cys-tRNA synthase (392 aa).

Pyridoxal 5'-phosphate-binding positions include 85 to 86 (AR), Asn190, and 213 to 215 (SGH). N6-(pyridoxal phosphate)lysine is present on Lys216.

The protein belongs to the SepCysS family. As to quaternary structure, homodimer. Interacts with SepRS. Pyridoxal 5'-phosphate is required as a cofactor.

The enzyme catalyses O-phospho-L-seryl-tRNA(Cys) + hydrogen sulfide + H(+) = L-cysteinyl-tRNA(Cys) + phosphate. Its function is as follows. Converts O-phospho-L-seryl-tRNA(Cys) (Sep-tRNA(Cys)) to L-cysteinyl-tRNA(Cys) (Cys-tRNA(Cys)). In Methanoculleus marisnigri (strain ATCC 35101 / DSM 1498 / JR1), this protein is O-phospho-L-seryl-tRNA:Cys-tRNA synthase.